The chain runs to 114 residues: Fluoride-specific ion channel FluC 2 (114 aa).

3 helical membrane passes run 30–50, 57–77, and 88–108; these read FPVA…LLSG, TFAL…TFAV, and ALPS…AAWL. Residues glycine 67 and threonine 70 each coordinate Na(+).

Belongs to the fluoride channel Fluc/FEX (TC 1.A.43) family.

Its subcellular location is the cell membrane. It carries out the reaction fluoride(in) = fluoride(out). With respect to regulation, na(+) is not transported, but it plays an essential structural role and its presence is essential for fluoride channel function. Fluoride-specific ion channel. Important for reducing fluoride concentration in the cell, thus reducing its toxicity. This chain is Fluoride-specific ion channel FluC 2, found in Rhodococcus jostii (strain RHA1).